Consider the following 1026-residue polypeptide: Contactin-4 (1026 aa).

A signal peptide spans 1–18; that stretch reads MRLPWELLVLQSFMLCLA. Ig-like C2-type domains follow at residues 32–117, 122–206, 225–311, 316–400, 406–493, and 497–586; these read PSHV…AKLQ, ENFK…HQVL, PKIE…GQVT, PNWV…AELS, PDFS…GNVV, and PTKV…DKLS. Intrachain disulfides connect Cys-50–Cys-100, Cys-144–Cys-194, Cys-247–Cys-295, Cys-337–Cys-384, Cys-429–Cys-477, and Cys-519–Cys-576. N-linked (GlcNAc...) asparagine glycans are attached at residues Asn-65, Asn-90, and Asn-191. N-linked (GlcNAc...) asparagine glycans are attached at residues Asn-370, Asn-375, and Asn-466. 4 Fibronectin type-III domains span residues 599-697, 702-799, 804-899, and 900-995; these read PPEA…TEEA, TPAN…SAEE, PPAS…TRKP, and PPSQ…ISNS. Positions 685 to 710 are disordered; it reads PSRPSEKRRTEEALPEVTPANVSGGG. Residues 687–696 show a composition bias toward basic and acidic residues; sequence RPSEKRRTEE. N-linked (GlcNAc...) asparagine glycans are attached at residues Asn-705, Asn-764, Asn-858, Asn-893, Asn-911, Asn-929, and Asn-954. The GPI-anchor amidated serine moiety is linked to residue Ser-1000. Residues 1001 to 1026 constitute a propeptide, removed in mature form; the sequence is GASTSNACTLSAISTIMISLTARSSL.

It belongs to the immunoglobulin superfamily. Contactin family. In terms of assembly, interacts with PTPRG. In terms of tissue distribution, specifically expressed in the nervous system. Not expressed in heart, spleen, lung, liver, kidney or skeletal muscle. In the hippocampus, it is highly expressed in CA1 pyramidal cells and weakly expressed in other regions of the hippocampus.

It is found in the cell membrane. The protein resides in the secreted. Its function is as follows. Contactins mediate cell surface interactions during nervous system development. Has some neurite outgrowth-promoting activity. May be involved in synaptogenesis. The polypeptide is Contactin-4 (Cntn4) (Rattus norvegicus (Rat)).